A 588-amino-acid chain; its full sequence is Tripartite motif-containing protein 29 (588 aa).

The disordered stretch occupies residues 1-66 (MEAADASRSN…GSALKPGEGR (66 aa)). 4 positions are modified to phosphoserine: S21, S28, S58, and S104. At Y106 the chain carries Phosphotyrosine. The B box-type zinc finger occupies 220–260 (FEARKCPVHGKTMELFCQTDQTCICYLCMFQEHKNHSTVTV). Zn(2+) is bound by residues C225, H228, C247, and H252. Residues 259-352 (TVEEAKAEKE…VKVIMDALDE (94 aa)) adopt a coiled-coil conformation. T476 is subject to Phosphothreonine. S489 is modified (phosphoserine).

Interacts with VIM and HINT1. Interacts with IKBKG/NEMO. Interacts with STING1. Constitutively phosphorylated by PKC on serine/threonine in A431 cells. As to expression, expressed in placenta, prostate and thymus.

The protein localises to the cytoplasm. The protein resides in the lysosome. In terms of biological role, plays a crucial role in the regulation of macrophage activation in response to viral or bacterial infections within the respiratory tract. Mechanistically, TRIM29 interacts with IKBKG/NEMO in the lysosome where it induces its 'Lys-48' ubiquitination and subsequent degradation. In turn, the expression of type I interferons and the production of pro-inflammatory cytokines are inhibited. Additionally, induces the 'Lys-48' ubiquitination of STING1 in a similar way, leading to its degradation. This Homo sapiens (Human) protein is Tripartite motif-containing protein 29 (TRIM29).